We begin with the raw amino-acid sequence, 122 residues long: Large ribosomal subunit protein uL14 (122 aa).

This sequence belongs to the universal ribosomal protein uL14 family. Part of the 50S ribosomal subunit. Forms a cluster with proteins L3 and L19. In the 70S ribosome, L14 and L19 interact and together make contacts with the 16S rRNA in bridges B5 and B8.

Functionally, binds to 23S rRNA. Forms part of two intersubunit bridges in the 70S ribosome. This Desulforudis audaxviator (strain MP104C) protein is Large ribosomal subunit protein uL14.